Here is a 640-residue protein sequence, read N- to C-terminus: MDKKYYQLLKNQFSSKEAVLTEIINLSAICELPKATEHFMSDVHGEYDAFNHVLRNGSGSIKEKLRDCFPEFSATEISSLATLIYYPQEKLDSECQLKETEEFENYCRINLVYLLKTVKFVGQKYTRSKVRKAFPEKFRYILEELINEVDSTTDKRDYFDSILSQLQNLGEFTRLIVALADTIRRLTVDHLHVVGDIYDRGPYPDKIIDRLIKMPSVDVQWGNHDIVWMAAFSGSPLAMMNVIRICARYGNLDILEESYGINLRMILEYAERYYEPSEAFQPRLVEGVRLSDDEKALLNKLQEATAILQFKLESQLIKRRPDFQLEHRDVLHFIDFSEKTIKLGTEVYELTDFQAPTVNPEQPESLTAEEEKIISHLLNNFRSSDKLKRHVEFLQEKGAMYLSYNGNLLIHGCLPLHENGDFKSFTVNKEAHAGRDLLDFFDQEVRKCLAHPENSTDLATDLMWYLWVGECSSLFGKTAMTTFERYYIKDKKTHVEKKNPYYQLREEAEIIRKILENFGLDEGGHLVNGHTPIKEKNGENPIKADGKLIVIDGGFAKAYQKETGIAGYTILYNSFGIQLVAHQPFSTVKEAVEKGTDIISLKCLVAEVDQRKRVKDTNVGQTLLSEIADLEVLFEHYEEF.

Belongs to the FBPase class 3 family. It depends on Mn(2+) as a cofactor.

It carries out the reaction beta-D-fructose 1,6-bisphosphate + H2O = beta-D-fructose 6-phosphate + phosphate. It participates in carbohydrate biosynthesis; gluconeogenesis. This is Fructose-1,6-bisphosphatase class 3 from Lactococcus lactis subsp. lactis (strain IL1403) (Streptococcus lactis).